A 560-amino-acid polypeptide reads, in one-letter code: Mitogen-activated protein kinase kinase kinase 3 (560 aa).

The interval 70–91 is disordered; sequence KRQSSSSSDNTSDKEEVETEET. The Protein kinase domain maps to 303–557; that stretch reads WLKGQLLGRG…AAELLHHPFV (255 aa). ATP is bound by residues 309-317 and lysine 331; that span reads LGRGSYASV. Residue aspartate 426 is the Proton acceptor of the active site.

The protein belongs to the protein kinase superfamily. STE Ser/Thr protein kinase family. MAP kinase kinase kinase subfamily. As to expression, expressed at low levels in roots, stems, siliques, leaves, seedlings and flower buds.

The catalysed reaction is L-seryl-[protein] + ATP = O-phospho-L-seryl-[protein] + ADP + H(+). It catalyses the reaction L-threonyl-[protein] + ATP = O-phospho-L-threonyl-[protein] + ADP + H(+). The polypeptide is Mitogen-activated protein kinase kinase kinase 3 (Arabidopsis thaliana (Mouse-ear cress)).